Consider the following 334-residue polypeptide: Holliday junction branch migration complex subunit RuvB (334 aa).

The interval 1-179 (MTHKISVLHQ…FAFTGRVDYY (179 aa)) is large ATPase domain (RuvB-L). Residues leucine 18, arginine 19, glycine 60, lysine 63, threonine 64, serine 65, 126 to 128 (EDF), arginine 169, tyrosine 179, and arginine 216 contribute to the ATP site. Threonine 64 is a Mg(2+) binding site. A small ATPAse domain (RuvB-S) region spans residues 180 to 250 (TDEDLVSILS…VAEKALAMLL (71 aa)). The segment at 253-334 (NLGLNEIDIK…RNPKDRWGEE (82 aa)) is head domain (RuvB-H). DNA-binding residues include arginine 308 and arginine 313.

Belongs to the RuvB family. In terms of assembly, homohexamer. Forms an RuvA(8)-RuvB(12)-Holliday junction (HJ) complex. HJ DNA is sandwiched between 2 RuvA tetramers; dsDNA enters through RuvA and exits via RuvB. An RuvB hexamer assembles on each DNA strand where it exits the tetramer. Each RuvB hexamer is contacted by two RuvA subunits (via domain III) on 2 adjacent RuvB subunits; this complex drives branch migration. In the full resolvosome a probable DNA-RuvA(4)-RuvB(12)-RuvC(2) complex forms which resolves the HJ.

The protein localises to the cytoplasm. The enzyme catalyses ATP + H2O = ADP + phosphate + H(+). In terms of biological role, the RuvA-RuvB-RuvC complex processes Holliday junction (HJ) DNA during genetic recombination and DNA repair, while the RuvA-RuvB complex plays an important role in the rescue of blocked DNA replication forks via replication fork reversal (RFR). RuvA specifically binds to HJ cruciform DNA, conferring on it an open structure. The RuvB hexamer acts as an ATP-dependent pump, pulling dsDNA into and through the RuvAB complex. RuvB forms 2 homohexamers on either side of HJ DNA bound by 1 or 2 RuvA tetramers; 4 subunits per hexamer contact DNA at a time. Coordinated motions by a converter formed by DNA-disengaged RuvB subunits stimulates ATP hydrolysis and nucleotide exchange. Immobilization of the converter enables RuvB to convert the ATP-contained energy into a lever motion, pulling 2 nucleotides of DNA out of the RuvA tetramer per ATP hydrolyzed, thus driving DNA branch migration. The RuvB motors rotate together with the DNA substrate, which together with the progressing nucleotide cycle form the mechanistic basis for DNA recombination by continuous HJ branch migration. Branch migration allows RuvC to scan DNA until it finds its consensus sequence, where it cleaves and resolves cruciform DNA. The sequence is that of Holliday junction branch migration complex subunit RuvB from Chlamydia trachomatis serovar A (strain ATCC VR-571B / DSM 19440 / HAR-13).